We begin with the raw amino-acid sequence, 381 residues long: Cytochrome b (381 aa).

A run of 4 helical transmembrane segments spans residues 34–54 (FGSL…FLAM), 78–99 (WLIR…YLHI), 114–134 (WNIG…GYVL), and 179–199 (FFAF…IHLL). The heme b site is built by His84 and His98. His183 and His197 together coordinate heme b. Residue His202 coordinates a ubiquinone. 4 helical membrane-spanning segments follow: residues 227–247 (YKDL…ALFM), 289–309 (LGGV…PLLH), 321–341 (LTQI…WIGG), and 348–368 (FITV…IIMP).

It belongs to the cytochrome b family. As to quaternary structure, the cytochrome bc1 complex contains 3 respiratory subunits (MT-CYB, CYC1 and UQCRFS1), 2 core proteins (UQCRC1 and UQCRC2) and probably 6 low-molecular weight proteins. Heme b is required as a cofactor.

Its subcellular location is the mitochondrion inner membrane. Component of the ubiquinol-cytochrome c reductase complex (complex III or cytochrome b-c1 complex) that is part of the mitochondrial respiratory chain. The b-c1 complex mediates electron transfer from ubiquinol to cytochrome c. Contributes to the generation of a proton gradient across the mitochondrial membrane that is then used for ATP synthesis. The chain is Cytochrome b (mt-cyb) from Sphyrna lewini (Scalloped hammerhead shark).